Reading from the N-terminus, the 350-residue chain is DNA polymerase IV (350 aa).

A UmuC domain is found at 4-185 (IIHIDMDCFY…LPLGKLPGIG (182 aa)). 2 residues coordinate Mg(2+): Asp8 and Asp103. Glu104 is a catalytic residue.

The protein belongs to the DNA polymerase type-Y family. As to quaternary structure, monomer. Mg(2+) is required as a cofactor.

It is found in the cytoplasm. The enzyme catalyses DNA(n) + a 2'-deoxyribonucleoside 5'-triphosphate = DNA(n+1) + diphosphate. Functionally, poorly processive, error-prone DNA polymerase involved in untargeted mutagenesis. Copies undamaged DNA at stalled replication forks, which arise in vivo from mismatched or misaligned primer ends. These misaligned primers can be extended by PolIV. Exhibits no 3'-5' exonuclease (proofreading) activity. May be involved in translesional synthesis, in conjunction with the beta clamp from PolIII. The chain is DNA polymerase IV from Aeromonas hydrophila subsp. hydrophila (strain ATCC 7966 / DSM 30187 / BCRC 13018 / CCUG 14551 / JCM 1027 / KCTC 2358 / NCIMB 9240 / NCTC 8049).